Here is a 95-residue protein sequence, read N- to C-terminus: Defensin-A3 (95 aa).

A signal peptide spans 1–19; the sequence is MRTLGLLLALLFLAAQTPA. Positions 20 to 61 are excised as a propeptide; the sequence is QLMGEEAEEATGRPEATEAQEAAAALMAARAADRHVTDPEQQ. 3 disulfides stabilise this stretch: Cys-66/Cys-93, Cys-68/Cys-82, and Cys-72/Cys-92.

This sequence belongs to the alpha-defensin family. In terms of tissue distribution, highly expressed in spleen, and expressed at lower levels in intestin and lung.

Its subcellular location is the secreted. Has antimicrobial activity. The polypeptide is Defensin-A3 (Ornithorhynchus anatinus (Duckbill platypus)).